The following is a 159-amino-acid chain: Cyclic pyranopterin monophosphate synthase (159 aa).

Substrate is bound by residues leucine 76–histidine 78 and methionine 114–glutamate 115. Aspartate 129 is an active-site residue.

The protein belongs to the MoaC family. In terms of assembly, homohexamer; trimer of dimers.

It catalyses the reaction (8S)-3',8-cyclo-7,8-dihydroguanosine 5'-triphosphate = cyclic pyranopterin phosphate + diphosphate. The protein operates within cofactor biosynthesis; molybdopterin biosynthesis. In terms of biological role, catalyzes the conversion of (8S)-3',8-cyclo-7,8-dihydroguanosine 5'-triphosphate to cyclic pyranopterin monophosphate (cPMP). In Oleidesulfovibrio alaskensis (strain ATCC BAA-1058 / DSM 17464 / G20) (Desulfovibrio alaskensis), this protein is Cyclic pyranopterin monophosphate synthase.